The primary structure comprises 189 residues: dTTP/UTP pyrophosphatase (189 aa).

The Proton acceptor role is filled by D73.

The protein belongs to the Maf family. YhdE subfamily. A divalent metal cation serves as cofactor.

The protein resides in the cytoplasm. It catalyses the reaction dTTP + H2O = dTMP + diphosphate + H(+). It carries out the reaction UTP + H2O = UMP + diphosphate + H(+). Its function is as follows. Nucleoside triphosphate pyrophosphatase that hydrolyzes dTTP and UTP. May have a dual role in cell division arrest and in preventing the incorporation of modified nucleotides into cellular nucleic acids. The sequence is that of dTTP/UTP pyrophosphatase from Vibrio parahaemolyticus serotype O3:K6 (strain RIMD 2210633).